The sequence spans 121 residues: Cell division protein FtsL (121 aa).

Residues 1 to 34 (MISRVTEALSKVKGSIGSNERHALPGVIGDDLLR) are Cytoplasmic-facing. Residues 35–57 (FGKLPLCLFICIILTAVTVVTTA) traverse the membrane as a helical segment. Residues 58–121 (HHTRLLTAQR…PSQENIVVQK (64 aa)) are Periplasmic-facing.

The protein belongs to the FtsL family. Part of a complex composed of FtsB, FtsL and FtsQ.

The protein localises to the cell inner membrane. Essential cell division protein. May link together the upstream cell division proteins, which are predominantly cytoplasmic, with the downstream cell division proteins, which are predominantly periplasmic. This is Cell division protein FtsL from Salmonella typhimurium (strain LT2 / SGSC1412 / ATCC 700720).